The following is a 653-amino-acid chain: Rab proteins geranylgeranyltransferase component A 1 (653 aa).

The interval 606 to 653 is disordered; sequence PPPPNPEDIILDGDSLQPEASESSAIPEANSETFKESTNLGNLEESSE. Over residues 623 to 646 the composition is skewed to polar residues; sequence PEASESSAIPEANSETFKESTNLG.

Belongs to the Rab GDI family. In terms of assembly, monomer. Heterotrimer composed of RABGGTA, RABGGTB and CHM; within this trimer, RABGGTA and RABGGTB form the catalytic component B, while CHM (component A) mediates Rab protein binding. Can associate with the Rab GGTase dimer (RGGT or component B) prior to Rab protein binding; the association is stabilized by geranylgeranyl pyrophosphate (GGpp). The CHM:RGGT:Rab complex is destabilized by GGpp. Interacts with RAB1A, RAB1B, RAB5A, RAB7A and RAB27A and mediates their prenylation. Interacts with the non-phosphorylated forms of RAB3A, RAB3B, RAB3C, RAB3D, RAB5B, RAB5C, RAB8A, RAB8B, RAB10, RAB12, RAB35, and RAB43.

Its subcellular location is the cytoplasm. The protein localises to the cytosol. Its function is as follows. Substrate-binding subunit of the Rab geranylgeranyltransferase (GGTase) complex. Binds unprenylated Rab proteins and presents the substrate peptide to the catalytic component B composed of RABGGTA and RABGGTB, and remains bound to it after the geranylgeranyl transfer reaction. The component A is thought to be regenerated by transferring its prenylated Rab back to the donor membrane. Besides, a pre-formed complex consisting of CHM and the Rab GGTase dimer (RGGT or component B) can bind to and prenylate Rab proteins; this alternative pathway is proposed to be the predominant pathway for Rab protein geranylgeranylation. In Homo sapiens (Human), this protein is Rab proteins geranylgeranyltransferase component A 1 (CHM).